A 333-amino-acid polypeptide reads, in one-letter code: Ferrochelatase (333 aa).

Residues H202 and E284 each coordinate Fe cation.

The protein belongs to the ferrochelatase family.

It localises to the cytoplasm. The catalysed reaction is heme b + 2 H(+) = protoporphyrin IX + Fe(2+). It functions in the pathway porphyrin-containing compound metabolism; protoheme biosynthesis; protoheme from protoporphyrin-IX: step 1/1. In terms of biological role, catalyzes the ferrous insertion into protoporphyrin IX. This chain is Ferrochelatase, found in Francisella tularensis subsp. mediasiatica (strain FSC147).